We begin with the raw amino-acid sequence, 393 residues long: Synaptic vesicle membrane protein VAT-1 homolog (393 aa).

The tract at residues 1 to 40 (MSDEREVAEAATGEDASSPPPKTEAASDPQHPAASEGAAA) is disordered. The residue at position 2 (Ser-2) is an N-acetylserine. Phosphoserine occurs at positions 2, 18, 27, 35, and 44.

This sequence belongs to the zinc-containing alcohol dehydrogenase family. Quinone oxidoreductase subfamily. In terms of tissue distribution, expressed in brain. Also expressed in glioblastoma cells.

It localises to the cytoplasm. The protein localises to the mitochondrion outer membrane. In terms of biological role, possesses ATPase activity. Plays a part in calcium-regulated keratinocyte activation in epidermal repair mechanisms. Has no effect on cell proliferation. Negatively regulates mitochondrial fusion in cooperation with mitofusin proteins (MFN1-2). This Homo sapiens (Human) protein is Synaptic vesicle membrane protein VAT-1 homolog (VAT1).